Reading from the N-terminus, the 91-residue chain is MAKQTTMKNAALKQLTKDADEILHLIKVQLDNLTLPSCPLYEEVLDTQMFGLQKEVDFAVKLGLVDREDGKQIMLRLEKELSKLHEAFTLV.

The protein belongs to the UPF0358 family.

The protein is UPF0358 protein SAB0977 of Staphylococcus aureus (strain bovine RF122 / ET3-1).